The following is a 486-amino-acid chain: ATP synthase subunit beta (486 aa).

170-177 provides a ligand contact to ATP; that stretch reads GGAGVGKT.

This sequence belongs to the ATPase alpha/beta chains family. F-type ATPases have 2 components, CF(1) - the catalytic core - and CF(0) - the membrane proton channel. CF(1) has five subunits: alpha(3), beta(3), gamma(1), delta(1), epsilon(1). CF(0) has three main subunits: a(1), b(2) and c(9-12). The alpha and beta chains form an alternating ring which encloses part of the gamma chain. CF(1) is attached to CF(0) by a central stalk formed by the gamma and epsilon chains, while a peripheral stalk is formed by the delta and b chains.

The protein localises to the cell membrane. The catalysed reaction is ATP + H2O + 4 H(+)(in) = ADP + phosphate + 5 H(+)(out). Functionally, produces ATP from ADP in the presence of a proton gradient across the membrane. The catalytic sites are hosted primarily by the beta subunits. The polypeptide is ATP synthase subunit beta (Clavibacter michiganensis subsp. michiganensis (strain NCPPB 382)).